The sequence spans 96 residues: Putative septation protein SpoVG (96 aa).

Belongs to the SpoVG family.

Could be involved in septation. The sequence is that of Putative septation protein SpoVG from Borrelia hermsii (strain HS1 / DAH).